A 377-amino-acid polypeptide reads, in one-letter code: Nitric oxide reductase FlRd-NAD(+) reductase (377 aa).

It belongs to the FAD-dependent oxidoreductase family. The cofactor is FAD.

The protein localises to the cytoplasm. It catalyses the reaction 2 reduced [nitric oxide reductase rubredoxin domain] + NAD(+) + H(+) = 2 oxidized [nitric oxide reductase rubredoxin domain] + NADH. The protein operates within nitrogen metabolism; nitric oxide reduction. Its function is as follows. One of at least two accessory proteins for anaerobic nitric oxide (NO) reductase. Reduces the rubredoxin moiety of NO reductase. This Shigella flexneri serotype 5b (strain 8401) protein is Nitric oxide reductase FlRd-NAD(+) reductase.